The following is a 64-amino-acid chain: Crotamine CRO3 (64 aa).

The N-terminal stretch at 1–22 (MILYLLFAFLFLAFLSEPGNAY) is a signal peptide. Cystine bridges form between Cys25–Cys57, Cys32–Cys51, and Cys39–Cys58.

The protein belongs to the crotamine-myotoxin family. As to quaternary structure, monomer. Expressed by the venom gland.

The protein resides in the secreted. In terms of biological role, cationic peptide that possesses multiple functions. It acts as a cell-penetrating peptide (CPP), and as a potent voltage-gated potassium channel (Kv) inhibitor. It exhibits antimicrobial activities, hind limb paralysis, and severe muscle necrosis by a non-enzymatic mechanism. The polypeptide is Crotamine CRO3 (CRO3) (Crotalus durissus terrificus (South American rattlesnake)).